A 173-amino-acid chain; its full sequence is CKLF-like MARVEL transmembrane domain-containing protein 8 (173 aa).

Residues 36-168 (FLRTPPGLLI…NTYFSFIAWR (133 aa)) enclose the MARVEL domain. The next 4 helical transmembrane spans lie at 41 to 61 (PGLL…LIAG), 70 to 90 (FGWV…FLIV), 105 to 125 (TTVG…AAIV), and 147 to 167 (FFAF…FIAW).

Belongs to the chemokine-like factor family.

The protein resides in the membrane. The protein is CKLF-like MARVEL transmembrane domain-containing protein 8 (Cmtm8) of Mus musculus (Mouse).